Reading from the N-terminus, the 260-residue chain is Phosphate import ATP-binding protein PstB (260 aa).

The region spanning 14–255 is the ABC transporter domain; it reads LQIRNLDFFY…PGKKQTEDYI (242 aa). 46 to 53 is a binding site for ATP; that stretch reads GPSGCGKS.

This sequence belongs to the ABC transporter superfamily. Phosphate importer (TC 3.A.1.7) family. The complex is composed of two ATP-binding proteins (PstB), two transmembrane proteins (PstC and PstA) and a solute-binding protein (PstS).

The protein localises to the cell inner membrane. The enzyme catalyses phosphate(out) + ATP + H2O = ADP + 2 phosphate(in) + H(+). Functionally, part of the ABC transporter complex PstSACB involved in phosphate import. Responsible for energy coupling to the transport system. This chain is Phosphate import ATP-binding protein PstB, found in Thiobacillus denitrificans (strain ATCC 25259 / T1).